A 338-amino-acid chain; its full sequence is Clavatol oxidase claD (338 aa).

The 107-residue stretch at 193 to 299 folds into the Fe2OG dioxygenase domain; that stretch reads DPMSLLRLLH…RYSVVFFYDG (107 aa). Fe cation-binding residues include His222, Asp224, and His280. Arg290 provides a ligand contact to 2-oxoglutarate.

This sequence belongs to the iron/ascorbate-dependent oxidoreductase family. Fe(2+) serves as cofactor.

The enzyme catalyses clavatol + 2-oxoglutarate + O2 = hydroxyclavatol + succinate + CO2. Its pathway is secondary metabolite biosynthesis. In terms of biological role, 2-oxoglutarate-dependent dioxygenase; part of the cla gene cluster that produces clavatol and ortho-quinone methide. The clavatol biosynthesis cluster cla and the terrestric acid cluster tra are both involved in the production of peniphenones and penilactones. The non-reducing PKS claF is responsible for the formation of clavatol from successive condensations of 3 malonyl-CoA units, presumably with a simple acetyl-CoA starter unit, and 2 methylation steps. The esterase claE probably collaborates with claF by catalyzing the hydrolysis of ACP-bound acyl intermediates to free the ACP from stalled intermediates. The clavatol oxidase claD then converts clavatol to hydroxyclavatol. Spontaneous dehydration of hydroxyclavatol leads to the accumulation of the highly active ortho-quinone methide. On the other hand, the PKS-NRPS hybrid traA is involved in the formation of crustosic acid, with the help of traB and traD. The polyketide synthase module (PKS) of traA is responsible for the synthesis of the polyketide backbone via the condensation of an acetyl-CoA starter unit with 3 malonyl-CoA units. The downstream nonribosomal peptide synthetase (NRPS) module then amidates the carboxyl end of the polyketide with L-malic acid. Because traA lacks a designated enoylreductase (ER) domain, the required activity is provided the enoyl reductase traG. Crustosic acid undergoes decarboxylation and isomerization to the terrestric acid, catalyzed by the 2-oxoglutarate-dependent dioxygenase traH. Both acids are further converted to the 2 gamma-butyrolactones (R)-5-methyltetronic acid and (S)-5-carboxylmethyltetronic acid, with involvement of the cytochrome P450 monooxygenase claJ. Spontaneous addition of the methide to these gamma-butyrolactones leads to peniphenone D and penilactone D, which undergo again stereospecific attacking by methide to give penilactones A and B. This Penicillium crustosum (Blue mold fungus) protein is Clavatol oxidase claD.